A 20-amino-acid polypeptide reads, in one-letter code: Glutathione S-transferase 2 (20 aa).

The region spanning 1 to 20 (GYKVTYFAIRGLAEPIXLLL) is the GST N-terminal domain. Tyr-6 is a binding site for glutathione.

It belongs to the GST superfamily. Sigma family.

The enzyme catalyses RX + glutathione = an S-substituted glutathione + a halide anion + H(+). Conjugation of reduced glutathione to a wide number of exogenous and endogenous hydrophobic electrophiles. This chain is Glutathione S-transferase 2 (GST2), found in Ascaris suum (Pig roundworm).